The sequence spans 231 residues: Thymidylate kinase (231 aa).

10–17 (GGEGAGKT) contributes to the ATP binding site.

It belongs to the thymidylate kinase family.

It carries out the reaction dTMP + ATP = dTDP + ADP. In terms of biological role, phosphorylation of dTMP to form dTDP in both de novo and salvage pathways of dTTP synthesis. This Acaryochloris marina (strain MBIC 11017) protein is Thymidylate kinase.